Reading from the N-terminus, the 890-residue chain is DNA mismatch repair protein MutS (890 aa).

Residue 646-653 (GPNMAGKS) participates in ATP binding.

This sequence belongs to the DNA mismatch repair MutS family.

In terms of biological role, this protein is involved in the repair of mismatches in DNA. It is possible that it carries out the mismatch recognition step. This protein has a weak ATPase activity. The polypeptide is DNA mismatch repair protein MutS (Hyphomonas neptunium (strain ATCC 15444)).